Here is a 351-residue protein sequence, read N- to C-terminus: Tryptophan--tRNA ligase (351 aa).

ATP is bound by residues 11–13 (RPT) and 19–20 (GH). Positions 12 to 20 (PTGALHLGH) match the 'HIGH' region motif. L-tryptophan is bound at residue Asp-139. ATP-binding positions include 151–153 (GRD), Leu-190, and 198–202 (KMSKS). The 'KMSKS' region motif lies at 198-202 (KMSKS).

The protein belongs to the class-I aminoacyl-tRNA synthetase family. As to quaternary structure, homodimer.

The protein resides in the cytoplasm. It carries out the reaction tRNA(Trp) + L-tryptophan + ATP = L-tryptophyl-tRNA(Trp) + AMP + diphosphate + H(+). Catalyzes the attachment of tryptophan to tRNA(Trp). The chain is Tryptophan--tRNA ligase from Borreliella burgdorferi (strain ATCC 35210 / DSM 4680 / CIP 102532 / B31) (Borrelia burgdorferi).